Here is a 145-residue protein sequence, read N- to C-terminus: Large ribosomal subunit protein uL13 (145 aa).

The protein belongs to the universal ribosomal protein uL13 family. Part of the 50S ribosomal subunit.

In terms of biological role, this protein is one of the early assembly proteins of the 50S ribosomal subunit, although it is not seen to bind rRNA by itself. It is important during the early stages of 50S assembly. The chain is Large ribosomal subunit protein uL13 from Macrococcus caseolyticus (strain JCSC5402) (Macrococcoides caseolyticum).